A 555-amino-acid polypeptide reads, in one-letter code: Dihydroxy-acid dehydratase (555 aa).

Position 78 (aspartate 78) interacts with Mg(2+). [2Fe-2S] cluster is bound at residue cysteine 119. Mg(2+)-binding residues include aspartate 120 and lysine 121. Lysine 121 is modified (N6-carboxylysine). Position 195 (cysteine 195) interacts with [2Fe-2S] cluster. Glutamate 444 is a Mg(2+) binding site. The active-site Proton acceptor is serine 470.

It belongs to the IlvD/Edd family. As to quaternary structure, homodimer. It depends on [2Fe-2S] cluster as a cofactor. Requires Mg(2+) as cofactor.

It carries out the reaction (2R)-2,3-dihydroxy-3-methylbutanoate = 3-methyl-2-oxobutanoate + H2O. The catalysed reaction is (2R,3R)-2,3-dihydroxy-3-methylpentanoate = (S)-3-methyl-2-oxopentanoate + H2O. It functions in the pathway amino-acid biosynthesis; L-isoleucine biosynthesis; L-isoleucine from 2-oxobutanoate: step 3/4. It participates in amino-acid biosynthesis; L-valine biosynthesis; L-valine from pyruvate: step 3/4. Its function is as follows. Functions in the biosynthesis of branched-chain amino acids. Catalyzes the dehydration of (2R,3R)-2,3-dihydroxy-3-methylpentanoate (2,3-dihydroxy-3-methylvalerate) into 2-oxo-3-methylpentanoate (2-oxo-3-methylvalerate) and of (2R)-2,3-dihydroxy-3-methylbutanoate (2,3-dihydroxyisovalerate) into 2-oxo-3-methylbutanoate (2-oxoisovalerate), the penultimate precursor to L-isoleucine and L-valine, respectively. In Dehalococcoides mccartyi (strain ATCC BAA-2266 / KCTC 15142 / 195) (Dehalococcoides ethenogenes (strain 195)), this protein is Dihydroxy-acid dehydratase.